A 441-amino-acid polypeptide reads, in one-letter code: MSTLTPREIVSELDRFVVGQEKAKRMVAVAMRNRWRRQRLEPSLRDEVAPKNIIMMGPTGVGKTEIARRLARLCGAPFIKVEATKYTEVGYVGRDVESMVRDLMEIGVSLIRDEEATRVRARAEAAAEERLLDLLLPQSPADGGETRQSTRDKLRGLWRQGHLDDREVDMEVEESTKGPQMDIFAMPGMESMGNQFRDLMGKAFPARRKMRKMKLREAWNLLVDEEASRLLDQDKVVDIARERVEQTGIIFIDELDKVASGEGTHRTTDISREGVQRDLLPIVEGSVVNTKYGMVRTDHILFIAAGAFHFSKPSDLIPELQGRFPLRVELDALGRDEFYRILTEPHNALTRQYAALLATEGVTVSFTDDGLREIAAFAEEVNEETENIGARRLYTMMERILADISFDAPDRPGEHVTVDAAYVRTHLEDVRVDKDLSRYIL.

ATP is bound by residues V18, 60–65 (GVGKTE), D253, E319, and R391.

This sequence belongs to the ClpX chaperone family. HslU subfamily. In terms of assembly, a double ring-shaped homohexamer of HslV is capped on each side by a ring-shaped HslU homohexamer. The assembly of the HslU/HslV complex is dependent on binding of ATP.

Its subcellular location is the cytoplasm. ATPase subunit of a proteasome-like degradation complex; this subunit has chaperone activity. The binding of ATP and its subsequent hydrolysis by HslU are essential for unfolding of protein substrates subsequently hydrolyzed by HslV. HslU recognizes the N-terminal part of its protein substrates and unfolds these before they are guided to HslV for hydrolysis. This is ATP-dependent protease ATPase subunit HslU from Nitratidesulfovibrio vulgaris (strain DP4) (Desulfovibrio vulgaris).